A 128-amino-acid polypeptide reads, in one-letter code: NHP2-like protein 1 (128 aa).

The interval 36 to 48 (RKGANEATKTLNR) is interaction with U4 snRNA and U4atac snRNA. The tract at residues 96-128 (SRPVIACSVTIKEGSQLKPQIQSVQQAIERLLV) is important for U4 snRNA-binding.

Belongs to the eukaryotic ribosomal protein eL8 family. As to quaternary structure, identified in the spliceosome B complex. Component of the U4/U6-U5 tri-snRNP complex. Part of the small subunit (SSU) processome, composed of more than 70 proteins and the RNA chaperone small nucleolar RNA (snoRNA) U3.

The protein localises to the nucleus. It localises to the nucleolus. In terms of biological role, part of the small subunit (SSU) processome, first precursor of the small eukaryotic ribosomal subunit. During the assembly of the SSU processome in the nucleolus, many ribosome biogenesis factors, an RNA chaperone and ribosomal proteins associate with the nascent pre-rRNA and work in concert to generate RNA folding, modifications, rearrangements and cleavage as well as targeted degradation of pre-ribosomal RNA by the RNA exosome. Involved in pre-mRNA splicing as component of the spliceosome. Binds to the 5'-stem-loop of U4 snRNA and thereby contributes to spliceosome assembly. The protein undergoes a conformational change upon RNA-binding. Core component of box C/D small nucleolar ribonucleoprotein (snoRNP) complexes that function in methylation of multiple sites on ribosomal RNAs (rRNAs) and messenger RNAs (mRNAs). The sequence is that of NHP2-like protein 1 from Xenopus laevis (African clawed frog).